A 194-amino-acid polypeptide reads, in one-letter code: Ras-related protein Rab-22A (194 aa).

A GTP-binding site is contributed by 12 to 20 (GDTGVGKSS). Residues 34-42 (INPTIGASF) carry the Effector region motif. Residues 60–64 (DTAGQ), 118–121 (NKCD), and 148–150 (SAK) each bind GTP. Residues 170–194 (DANPASGGKGFKLRRQPSEPKRSCC) form a disordered region. Basic and acidic residues predominate over residues 185-194 (QPSEPKRSCC). Residues cysteine 193 and cysteine 194 are each lipidated (S-geranylgeranyl cysteine).

It belongs to the small GTPase superfamily. Rab family. In terms of assembly, binds EEA1. Interacts (in its GTP-bound form) with RINL. Interacts directly with ZFYVE20. Interacts (in its GTP-bound form) with RABGEF1. As to expression, detected in brain and heart, and at lower levels in lung and spleen.

The protein localises to the endosome membrane. It localises to the cell membrane. It is found in the early endosome. The protein resides in the late endosome. Its subcellular location is the cell projection. The protein localises to the ruffle. It localises to the cytoplasmic vesicle. It is found in the phagosome. The protein resides in the phagosome membrane. Functionally, plays a role in endocytosis and intracellular protein transport. Mediates trafficking of TF from early endosomes to recycling endosomes. Required for NGF-mediated endocytosis of NTRK1, and subsequent neurite outgrowth. Binds GTP and GDP and has low GTPase activity. Alternates between a GTP-bound active form and a GDP-bound inactive form. The polypeptide is Ras-related protein Rab-22A (Rab22a) (Mus musculus (Mouse)).